The primary structure comprises 821 residues: Phenylalanine--tRNA ligase beta subunit (821 aa).

Residues 39 to 149 (RTWAEGVVVG…DAVTVGEDVR (111 aa)) form the tRNA-binding domain. In terms of domain architecture, B5 spans 409-503 (PLERTLTLRL…RLYGYDRFEE (95 aa)). Mg(2+) contacts are provided by Asp-481, Asp-487, Glu-490, and Glu-491. The 97-residue stretch at 724-820 (STYPASDRDL…LVEKYAVTLR (97 aa)) folds into the FDX-ACB domain.

Belongs to the phenylalanyl-tRNA synthetase beta subunit family. Type 1 subfamily. As to quaternary structure, tetramer of two alpha and two beta subunits. Requires Mg(2+) as cofactor.

The protein localises to the cytoplasm. It catalyses the reaction tRNA(Phe) + L-phenylalanine + ATP = L-phenylalanyl-tRNA(Phe) + AMP + diphosphate + H(+). The polypeptide is Phenylalanine--tRNA ligase beta subunit (Thermosynechococcus vestitus (strain NIES-2133 / IAM M-273 / BP-1)).